The following is a 392-amino-acid chain: Nicotinate phosphoribosyltransferase (392 aa).

His-216 carries the post-translational modification Phosphohistidine; by autocatalysis.

Belongs to the NAPRTase family. Post-translationally, transiently phosphorylated on a His residue during the reaction cycle. Phosphorylation strongly increases the affinity for substrates and increases the rate of nicotinate D-ribonucleotide production. Dephosphorylation regenerates the low-affinity form of the enzyme, leading to product release.

It carries out the reaction nicotinate + 5-phospho-alpha-D-ribose 1-diphosphate + ATP + H2O = nicotinate beta-D-ribonucleotide + ADP + phosphate + diphosphate. It participates in cofactor biosynthesis; NAD(+) biosynthesis; nicotinate D-ribonucleotide from nicotinate: step 1/1. Functionally, catalyzes the synthesis of beta-nicotinate D-ribonucleotide from nicotinate and 5-phospho-D-ribose 1-phosphate at the expense of ATP. This is Nicotinate phosphoribosyltransferase from Cupriavidus necator (strain ATCC 17699 / DSM 428 / KCTC 22496 / NCIMB 10442 / H16 / Stanier 337) (Ralstonia eutropha).